The following is a 249-amino-acid chain: Homeobox protein TGIF2LX (249 aa).

Disordered stretches follow at residues 1–65 (MEAA…GYSP) and 126–199 (DPIV…PKKK). Residues 9–27 (AETRSRVEKDSRRAIKDSP) are compositionally biased toward basic and acidic residues. Residues 28 to 46 (AKTQSPAQDTSIMLRNNAD) show a composition bias toward polar residues. A DNA-binding region (homeobox; TALE-type) is located at residues 55 to 118 (EHKKKRKGYS…INARRRILPD (64 aa)). The segment covering 159–172 (DNVQSLPLRSSPKG) has biased composition (polar residues).

Belongs to the TALE/TGIF homeobox family.

Its subcellular location is the nucleus. Functionally, may have a transcription role in testis. In Macaca mulatta (Rhesus macaque), this protein is Homeobox protein TGIF2LX (TGIF2LX).